A 386-amino-acid polypeptide reads, in one-letter code: Ferrochelatase (386 aa).

H196 and E277 together coordinate Fe cation.

Belongs to the ferrochelatase family.

It is found in the cytoplasm. The enzyme catalyses heme b + 2 H(+) = protoporphyrin IX + Fe(2+). Its pathway is porphyrin-containing compound metabolism; protoheme biosynthesis; protoheme from protoporphyrin-IX: step 1/1. In terms of biological role, catalyzes the ferrous insertion into protoporphyrin IX. This is Ferrochelatase from Picosynechococcus sp. (strain ATCC 27264 / PCC 7002 / PR-6) (Agmenellum quadruplicatum).